A 587-amino-acid chain; its full sequence is Sulfite reductase [NADPH] hemoprotein beta-component (587 aa).

The segment covering 1–13 has biased composition (polar residues); the sequence is MQSTDNDLSQSPP. Residues 1–20 are disordered; sequence MQSTDNDLSQSPPKLSADEQ. Residues Cys-439, Cys-445, Cys-484, and Cys-488 each coordinate [4Fe-4S] cluster. A siroheme-binding site is contributed by Cys-488.

This sequence belongs to the nitrite and sulfite reductase 4Fe-4S domain family. Alpha(8)-beta(8). The alpha component is a flavoprotein, the beta component is a hemoprotein. The cofactor is siroheme. [4Fe-4S] cluster serves as cofactor.

It catalyses the reaction hydrogen sulfide + 3 NADP(+) + 3 H2O = sulfite + 3 NADPH + 4 H(+). The protein operates within sulfur metabolism; hydrogen sulfide biosynthesis; hydrogen sulfide from sulfite (NADPH route): step 1/1. In terms of biological role, component of the sulfite reductase complex that catalyzes the 6-electron reduction of sulfite to sulfide. This is one of several activities required for the biosynthesis of L-cysteine from sulfate. The chain is Sulfite reductase [NADPH] hemoprotein beta-component from Bordetella petrii (strain ATCC BAA-461 / DSM 12804 / CCUG 43448).